A 213-amino-acid chain; its full sequence is Thiopurine S-methyltransferase (213 aa).

S-adenosyl-L-methionine is bound by residues Trp-10, Leu-45, Glu-66, and Arg-121.

The protein belongs to the class I-like SAM-binding methyltransferase superfamily. TPMT family.

Its subcellular location is the cytoplasm. It catalyses the reaction S-adenosyl-L-methionine + a thiopurine = S-adenosyl-L-homocysteine + a thiopurine S-methylether.. This is Thiopurine S-methyltransferase from Aliivibrio fischeri (strain ATCC 700601 / ES114) (Vibrio fischeri).